A 194-amino-acid chain; its full sequence is Protein cholesin (194 aa).

Residues methionine 1–arginine 83 are disordered. Phosphoserine is present on residues serine 23 and serine 59. Residues glutamate 61–arginine 83 show a composition bias toward basic and acidic residues. 2 positions are modified to phosphoserine: serine 97 and serine 175.

As to expression, secreted from the instestine, secretion is induced by feeding and cholesterol absorption.

The protein resides in the secreted. In terms of biological role, hormone secreted from the intestine in response to cholesterol, where it acts to inhibit cholesterol synthesis in the liver and VLDL secretion,leading to a reduction in circulating cholesterol levels. Acts through binding to its receptor, GPR146. This is Protein cholesin from Homo sapiens (Human).